Consider the following 401-residue polypeptide: S-adenosylmethionine synthase (401 aa).

Position 135-140 (135-140 (GHGSGD)) interacts with ATP.

This sequence belongs to the AdoMet synthase 2 family. Requires Mg(2+) as cofactor.

It carries out the reaction L-methionine + ATP + H2O = S-adenosyl-L-methionine + phosphate + diphosphate. The protein operates within amino-acid biosynthesis; S-adenosyl-L-methionine biosynthesis; S-adenosyl-L-methionine from L-methionine: step 1/1. Catalyzes the formation of S-adenosylmethionine from methionine and ATP. This Methanothermobacter thermautotrophicus (strain ATCC 29096 / DSM 1053 / JCM 10044 / NBRC 100330 / Delta H) (Methanobacterium thermoautotrophicum) protein is S-adenosylmethionine synthase (mat).